The primary structure comprises 272 residues: Digeranylgeranylglyceryl phosphate synthase (272 aa).

8 helical membrane passes run 16 to 36 (AFIA…EIIL), 79 to 99 (ALYY…IISL), 100 to 120 (ENGI…YDLK), 124 to 144 (FIGN…GGLI), 148 to 168 (VNLG…REII), 194 to 214 (AVML…LLYY), 217 to 237 (IFSI…VYSA), and 252 to 272 (ISKY…MGAL).

It belongs to the UbiA prenyltransferase family. DGGGP synthase subfamily. Requires Mg(2+) as cofactor.

The protein resides in the cell membrane. The enzyme catalyses sn-3-O-(geranylgeranyl)glycerol 1-phosphate + (2E,6E,10E)-geranylgeranyl diphosphate = 2,3-bis-O-(geranylgeranyl)-sn-glycerol 1-phosphate + diphosphate. The protein operates within membrane lipid metabolism; glycerophospholipid metabolism. In terms of biological role, prenyltransferase that catalyzes the transfer of the geranylgeranyl moiety of geranylgeranyl diphosphate (GGPP) to the C2 hydroxyl of (S)-3-O-geranylgeranylglyceryl phosphate (GGGP). This reaction is the second ether-bond-formation step in the biosynthesis of archaeal membrane lipids. The polypeptide is Digeranylgeranylglyceryl phosphate synthase (Methanosphaera stadtmanae (strain ATCC 43021 / DSM 3091 / JCM 11832 / MCB-3)).